Consider the following 251-residue polypeptide: Uridylate kinase (251 aa).

11–14 (KLSG) is a binding site for ATP. Residues 19–24 (GNQGFG) are involved in allosteric activation by GTP. Position 53 (Gly-53) interacts with UMP. ATP-binding residues include Gly-54 and Arg-58. Residues Asp-73 and 134 to 141 (TGNPYFTT) contribute to the UMP site. 3 residues coordinate ATP: Thr-161, Tyr-167, and Asp-170.

This sequence belongs to the UMP kinase family. Homohexamer.

The protein localises to the cytoplasm. The enzyme catalyses UMP + ATP = UDP + ADP. It functions in the pathway pyrimidine metabolism; CTP biosynthesis via de novo pathway; UDP from UMP (UMPK route): step 1/1. Allosterically activated by GTP. Inhibited by UTP. Its function is as follows. Catalyzes the reversible phosphorylation of UMP to UDP. The protein is Uridylate kinase of Protochlamydia amoebophila (strain UWE25).